A 337-amino-acid chain; its full sequence is Cytoskeleton protein RodZ (337 aa).

Residues 1-111 (MNTEATHDQN…LGKRRKKRDG (111 aa)) are Cytoplasmic-facing. One can recognise an HTH cro/C1-type domain in the interval 19–71 (LRNAREQLGLSQQAVAERLCLKVSTVRDIEEDKAPADLASTFLRGYIRSYARL). The segment at residues 30 to 49 (QQAVAERLCLKVSTVRDIEE) is a DNA-binding region (H-T-H motif). A helical; Signal-anchor for type II membrane protein transmembrane segment spans residues 112-132 (WLMTFTWLVLFVVIGLSGAWW). Topologically, residues 133–337 (WQDHKAQQEE…TLNAEQSPAQ (205 aa)) are periplasmic. Positions 145–167 (TMADQSSAELSSNSEQGQSVPLN) are enriched in polar residues. Positions 145–218 (TMADQSSAEL…AVVSPSQANV (74 aa)) are disordered. The span at 168–207 (TSTTTDPATTSTPPASVDTTATNTQTPAVTAPAPAVDPQQ) shows a compositional bias: low complexity. The segment covering 208–218 (NAVVSPSQANV) has biased composition (polar residues).

This sequence belongs to the RodZ family.

It is found in the cell inner membrane. Functionally, cytoskeletal protein that is involved in cell-shape control through regulation of the length of the long axis. In Shigella flexneri serotype 5b (strain 8401), this protein is Cytoskeleton protein RodZ.